The following is a 1027-amino-acid chain: LLGL scribble cell polarity complex component 2 (1027 aa).

WD repeat units lie at residues 36 to 69 (SALGYSPSLRILAIGTRSGAVKLYGAPGVEFMGL), 76 to 117 (VLQI…EESF), 132 to 169 (VTEILPHSSGELLYLGTESGNVFVVQLPGFRTLHDRTI), 193 to 227 (ALQEHPRDPNQILIGYSRGLVVIWDLQGSRALSHF), 233 to 268 (LENASWQRDGCLIVTCHSDGSHCQWPVSSDTQNPEP), 282 to 324 (AITK…GQQT), 332 to 366 (VIDFTVLSEADPAAAFDDPYALVVLAEEELVVIDL), 388 to 464 (TCSH…YKLS), 508 to 583 (QKIF…FVLV), and 592 to 653 (TSLA…LRQS). A Phosphoserine modification is found at serine 653. Residues 654 to 669 (FRRMRRSRVSSHKRRP) show a composition bias toward basic residues. A disordered region spans residues 654–678 (FRRMRRSRVSSHKRRPGGPTGEAQA). WD repeat units lie at residues 715–771 (VRTL…KEIQ), 780–832 (GILV…VSAK), 837–890 (LTAL…VRYS), and 904–927 (VFTKYGQGFYLISPSEFERFSLST). Residues 940–981 (TKAKKHNRPSNGNGTGLKMTSSGHVRNSKSQSDGDEKKPGPV) form a disordered region. Positions 957 to 970 (KMTSSGHVRNSKSQ) are enriched in polar residues. 2 positions are modified to phosphoserine: serine 971 and serine 1022.

This sequence belongs to the WD repeat L(2)GL family. Interacts with GPSM2/LGN, PRKCI/aPKC and PARD6B/Par-6. The complex is enhanced during mitosis. Interacts with DCAF1. Post-translationally, phosphorylated at Ser-653 by PRKCI. Phosphorylation is enhanced during cell polarization induced by calcium. Phosphorylation may occur during the cell-cell contact-induced cell polarization and may contribute to the segregation of LLGL2 from the PRKCI/aPKC and PARD6B/Par-6 complex.

The protein resides in the cytoplasm. In terms of biological role, part of a complex with GPSM2/LGN, PRKCI/aPKC and PARD6B/Par-6, which may ensure the correct organization and orientation of bipolar spindles for normal cell division. This complex plays roles in the initial phase of the establishment of epithelial cell polarity. This Mus musculus (Mouse) protein is LLGL scribble cell polarity complex component 2 (Llgl2).